A 603-amino-acid chain; its full sequence is Elongation factor 4 (603 aa).

The tr-type G domain occupies 2 to 184; that stretch reads NHIRNFSIIA…AVVARMPPPR (183 aa). Residues 14 to 19 and 131 to 134 contribute to the GTP site; these read DHGKST and NKMD.

This sequence belongs to the TRAFAC class translation factor GTPase superfamily. Classic translation factor GTPase family. LepA subfamily.

It localises to the cell inner membrane. The enzyme catalyses GTP + H2O = GDP + phosphate + H(+). In terms of biological role, required for accurate and efficient protein synthesis under certain stress conditions. May act as a fidelity factor of the translation reaction, by catalyzing a one-codon backward translocation of tRNAs on improperly translocated ribosomes. Back-translocation proceeds from a post-translocation (POST) complex to a pre-translocation (PRE) complex, thus giving elongation factor G a second chance to translocate the tRNAs correctly. Binds to ribosomes in a GTP-dependent manner. The chain is Elongation factor 4 from Albidiferax ferrireducens (strain ATCC BAA-621 / DSM 15236 / T118) (Rhodoferax ferrireducens).